Consider the following 208-residue polypeptide: MIAKGSEPWLFAAASATALFAILSWATDSLPFLNHAAHMGMALTFFMVIFFRDPERKVEISDAYMISPADGTVIDIRDRKICIFMFLQNVHVNRAPISGKIREITYKKGGYLPAFCKDSERNERNEFIIHSKYGDVEVTQIAGTIARRIVTYSNVNDSVEQGQRIGMIRFGSRVDVTIPHDFDITVCKGERVLAGKTVIATIKNDRDF.

The active-site Schiff-base intermediate with substrate; via pyruvic acid is the serine 172. Serine 172 is modified (pyruvic acid (Ser); by autocatalysis).

Belongs to the phosphatidylserine decarboxylase family. PSD-A subfamily. In terms of assembly, heterodimer of a large membrane-associated beta subunit and a small pyruvoyl-containing alpha subunit. Pyruvate serves as cofactor. Is synthesized initially as an inactive proenzyme. Formation of the active enzyme involves a self-maturation process in which the active site pyruvoyl group is generated from an internal serine residue via an autocatalytic post-translational modification. Two non-identical subunits are generated from the proenzyme in this reaction, and the pyruvate is formed at the N-terminus of the alpha chain, which is derived from the carboxyl end of the proenzyme. The post-translation cleavage follows an unusual pathway, termed non-hydrolytic serinolysis, in which the side chain hydroxyl group of the serine supplies its oxygen atom to form the C-terminus of the beta chain, while the remainder of the serine residue undergoes an oxidative deamination to produce ammonia and the pyruvoyl prosthetic group on the alpha chain.

It is found in the cell membrane. It carries out the reaction archaetidylserine + H(+) = archaetidylethanolamine + CO2. Functionally, catalyzes the formation of archaetidylethanolamine (PtdEtn) from archaetidylserine (PtdSer). The polypeptide is Putative archaetidylserine decarboxylase proenzyme (Methanosarcina acetivorans (strain ATCC 35395 / DSM 2834 / JCM 12185 / C2A)).